A 468-amino-acid chain; its full sequence is Cytochrome bd ubiquinol oxidase subunit 1 (468 aa).

9 helical membrane-spanning segments follow: residues 15-35, 51-71, 95-115, 124-144, 177-197, 219-239, 331-351, 366-386, and 416-436; these read TLFH…VALM, AKFW…TGIL, LAIE…LWIF, IHAL…FWIL, LWVE…FFIA, LAMI…HMQA, FRIM…GLWL, IMIA…IMTE, and SIIA…FLFI. A heme b-binding site is contributed by H18. H183 is a binding site for heme b. Residue M334 participates in heme b binding. Residues 448-468 are disordered; that stretch reads HHDVPVSTDPFSQEVYHGISS.

This sequence belongs to the cytochrome ubiquinol oxidase subunit 1 family. Heterodimer of subunits I and II. Requires heme b as cofactor. Heme d cis-diol serves as cofactor.

It is found in the cell membrane. The enzyme catalyses 2 a ubiquinol + O2(in) + 4 H(+)(in) = 2 a ubiquinone + 2 H2O(in) + 4 H(+)(out). The sequence is that of Cytochrome bd ubiquinol oxidase subunit 1 (cydA) from Bacillus subtilis (strain 168).